The primary structure comprises 338 residues: Auxin-responsive protein IAA9 (338 aa).

The disordered stretch occupies residues Met-1–Arg-25. Residues Ser-9–Asn-21 are compositionally biased toward low complexity. An EAR-like (transcriptional repression) motif is present at residues Leu-68 to Leu-72. The tract at residues Ala-150–Gly-186 is disordered. The span at Ser-168–Ala-180 shows a compositional bias: low complexity. The PB1 domain maps to Ala-216–Gly-318.

This sequence belongs to the Aux/IAA family. In terms of assembly, homodimers and heterodimers. Interacts with TPL. Phosphorylated by phytochrome A in vitro. In terms of tissue distribution, highly expressed in the whole plant.

The protein resides in the nucleus. Its function is as follows. Aux/IAA proteins are short-lived transcriptional factors that function as repressors of early auxin response genes at low auxin concentrations. Repression is thought to result from the interaction with auxin response factors (ARFs), proteins that bind to the auxin-responsive promoter element (AuxRE). Formation of heterodimers with ARF proteins may alter their ability to modulate early auxin response genes expression. The chain is Auxin-responsive protein IAA9 (IAA9) from Arabidopsis thaliana (Mouse-ear cress).